We begin with the raw amino-acid sequence, 372 residues long: MFFRLRFLVFFVLFRNLCCLLLSGDLFRVYGLGFNLGVMIALQILVGICLSWFFFRCIIPQNWIFTLLIHLEFDLGFIIRSLHIIFTSLLYFLLYIHIIKVIFLCLIFDSSMLVWFFGFLIFIFILIIAFIGYTLPCTSMSYWGLTVFSNILATIPLIGIYICQWIWCSEFINDFTLLKLHSIHIFLPFVLLFLIGAHFFVLHYFLSSDGLLDRFPFYYERFFFFLLYYLRDLFLIINILCFLIYYICIYWFFVFHEESWIIVDTLKTSDKILPEWFFLSFFGFLKSVPDKFMGLFLLFVLCFALFLFILNCILIFIYCRSSLLWMSLSLVLFYYLCVGGFLSLYVVLCFPLWMEIQFWVLLLFCFIVCRLD.

Transmembrane regions (helical) follow at residues 32–52, 77–99, 114–134, and 180–200; these read LGFNLGVMIALQILVGICLSW, FIIRSLHIIFTSLLYFLLYIHII, VWFFGFLIFIFILIIAFIGYT, and LHSIHIFLPFVLLFLIGAHFF. Histidine 83 and histidine 97 together coordinate heme b. 2 residues coordinate heme b: histidine 184 and histidine 198. Position 203 (histidine 203) interacts with a ubiquinone. 4 helical membrane passes run 228–248, 297–317, 330–350, and 351–371; these read YYLRDLFLIINILCFLIYYIC, LLFVLCFALFLFILNCILIFI, LVLFYYLCVGGFLSLYVVLCF, and PLWMEIQFWVLLLFCFIVCRL.

This sequence belongs to the cytochrome b family. The main subunits of complex b-c1 are: cytochrome b, cytochrome c1 and the Rieske protein. Heme b serves as cofactor.

It localises to the mitochondrion inner membrane. Its function is as follows. Component of the ubiquinol-cytochrome c reductase complex (complex III or cytochrome b-c1 complex) that is part of the mitochondrial respiratory chain. The b-c1 complex mediates electron transfer from ubiquinol to cytochrome c. Contributes to the generation of a proton gradient across the mitochondrial membrane that is then used for ATP synthesis. The sequence is that of Cytochrome b (MT-CYB) from Trypanoplasma borreli.